Consider the following 154-residue polypeptide: Transcriptional repressor NrdR (154 aa).

A zinc finger spans residues 3-34 (CPFCAHPDTRVADSRLMEERNAVRRRRHCPNC). An ATP-cone domain is found at 49 to 139 (PAVIGPDKKR…LHKRFDNPAD (91 aa)).

It belongs to the NrdR family. The cofactor is Zn(2+).

In terms of biological role, negatively regulates transcription of bacterial ribonucleotide reductase nrd genes and operons by binding to NrdR-boxes. In Neisseria meningitidis serogroup B (strain ATCC BAA-335 / MC58), this protein is Transcriptional repressor NrdR.